The following is a 360-amino-acid chain: Aminomethyltransferase (360 aa).

This sequence belongs to the GcvT family. The glycine cleavage system is composed of four proteins: P, T, L and H.

It catalyses the reaction N(6)-[(R)-S(8)-aminomethyldihydrolipoyl]-L-lysyl-[protein] + (6S)-5,6,7,8-tetrahydrofolate = N(6)-[(R)-dihydrolipoyl]-L-lysyl-[protein] + (6R)-5,10-methylene-5,6,7,8-tetrahydrofolate + NH4(+). The glycine cleavage system catalyzes the degradation of glycine. This chain is Aminomethyltransferase, found in Legionella pneumophila (strain Paris).